The following is a 274-amino-acid chain: Protein FAM210A (274 aa).

Residues 51-66 (KWLHSQPKQQDSSTKT) are compositionally biased toward polar residues. Positions 51–91 (KWLHSQPKQQDSSTKTPVHDLPSGSQHQSEESSPSAKSSIS) are disordered. Positions 81-91 (ESSPSAKSSIS) are enriched in low complexity. In terms of domain architecture, DUF1279 spans 105–217 (DQSIGLLKRF…GYLSTPPLVK (113 aa)). Residues 124–144 (VLIPVHLVTSSFWFGSFYYAA) traverse the membrane as a helical segment. The stretch at 221 to 274 (QDRMEETKELFTEKMEETRDIISGKMEETKDRISEKLQETKDRVAFRKKKNEEM) forms a coiled coil.

The protein belongs to the FAM210 family.

The protein localises to the membrane. Its subcellular location is the mitochondrion. It localises to the cytoplasm. Functionally, may play a role in the structure and strength of both muscle and bone. This is Protein FAM210A (fam210a) from Xenopus tropicalis (Western clawed frog).